Here is a 145-residue protein sequence, read N- to C-terminus: Transcription antitermination protein NusB (145 aa).

It belongs to the NusB family.

In terms of biological role, involved in transcription antitermination. Required for transcription of ribosomal RNA (rRNA) genes. Binds specifically to the boxA antiterminator sequence of the ribosomal RNA (rrn) operons. This is Transcription antitermination protein NusB from Burkholderia mallei (strain NCTC 10247).